A 57-amino-acid polypeptide reads, in one-letter code: Large ribosomal subunit protein bL32A (57 aa).

A disordered region spans residues 1–22 (MAVPARRTSKTKKRLRRTHEKL). The span at 7–20 (RTSKTKKRLRRTHE) shows a compositional bias: basic residues.

It belongs to the bacterial ribosomal protein bL32 family.

This Enterococcus faecalis (strain ATCC 700802 / V583) protein is Large ribosomal subunit protein bL32A (rpmF1).